Consider the following 789-residue polypeptide: Glycerol-3-phosphate acyltransferase (789 aa).

The HXXXXD motif motif lies at 276 to 281 (HRSYID).

The protein belongs to the GPAT/DAPAT family.

It is found in the cell membrane. It carries out the reaction sn-glycerol 3-phosphate + an acyl-CoA = a 1-acyl-sn-glycero-3-phosphate + CoA. It participates in phospholipid metabolism; CDP-diacylglycerol biosynthesis; CDP-diacylglycerol from sn-glycerol 3-phosphate: step 1/3. The protein is Glycerol-3-phosphate acyltransferase (plsB) of Mycobacterium tuberculosis (strain CDC 1551 / Oshkosh).